The sequence spans 528 residues: Na(+)/H(+) antiporter NhaB (528 aa).

Helical transmembrane passes span 23-43 (VAII…NPFV), 45-65 (GWLL…CYPL), 90-110 (LVAN…IYFM), 136-156 (CFAA…AVVI), 204-224 (LLMH…VGEP), 237-257 (FGEF…CGLI), 305-325 (GIIA…VGLI), 350-370 (EEAL…AVII), 392-412 (LALF…VFVG), 450-470 (ATPN…APLI), and 479-499 (VMAL…IMFF).

Belongs to the NhaB Na(+)/H(+) (TC 2.A.34) antiporter family.

The protein resides in the cell inner membrane. It carries out the reaction 2 Na(+)(in) + 3 H(+)(out) = 2 Na(+)(out) + 3 H(+)(in). Na(+)/H(+) antiporter that extrudes sodium in exchange for external protons. Can also transport lithium and potassium. The chain is Na(+)/H(+) antiporter NhaB from Vibrio parahaemolyticus serotype O3:K6 (strain RIMD 2210633).